Reading from the N-terminus, the 549-residue chain is Cytochrome bc1 complex cytochrome b subunit (549 aa).

The chain crosses the membrane as a helical span at residues 45 to 65; the sequence is FLLGEIALYSFVVLLITGVYL. Residues His-114 and His-128 each coordinate heme. Helical transmembrane passes span 118-138, 146-166, and 189-209; these read ALMF…TGAF, WVIG…GYSL, and VIGT…TILI. Heme contacts are provided by His-216 and His-231. The next 5 membrane-spanning stretches (helical) occupy residues 217–237, 266–286, 335–355, 381–401, and 418–438; these read ILLL…LVWF, SGAF…LLQI, PVWV…YPFL, IGAM…NDII, and IGMV…CIGL.

Belongs to the cytochrome b family. The cytochrome bc1 complex is composed of a cytochrome b (QcrB), the Rieske iron-sulfur protein (QcrA) and a diheme cytochrome c (QcrC) subunit. It depends on heme as a cofactor.

The protein localises to the cell membrane. It carries out the reaction a quinol + 2 Fe(III)-[cytochrome c](out) = a quinone + 2 Fe(II)-[cytochrome c](out) + 2 H(+)(out). Its function is as follows. Cytochrome b subunit of the cytochrome bc1 complex, an essential component of the respiratory electron transport chain required for ATP synthesis. The bc1 complex catalyzes the oxidation of ubiquinol and the reduction of cytochrome c in the respiratory chain. The bc1 complex operates through a Q-cycle mechanism that couples electron transfer to generation of the proton gradient that drives ATP synthesis. The cytochrome b subunit contains two ubiquinol reactive sites: the oxidation (QP) site and the reduction (QN) site. This is Cytochrome bc1 complex cytochrome b subunit (qcrB) from Mycobacterium bovis (strain ATCC BAA-935 / AF2122/97).